A 903-amino-acid polypeptide reads, in one-letter code: DNA gyrase subunit A (903 aa).

In terms of domain architecture, Topo IIA-type catalytic spans 36 to 499; sequence LPDARDGFKP…AIDDSDDEDL (464 aa). Tyr-124 acts as the O-(5'-phospho-DNA)-tyrosine intermediate in catalysis. Residues 526 to 532 carry the GyrA-box motif; sequence QNRGGKG. Residues 881–895 show a composition bias toward basic and acidic residues; the sequence is VDDDSVVKDDAEKQE. A disordered region spans residues 881-903; that stretch reads VDDDSVVKDDAEKQEIGPTETEE.

Belongs to the type II topoisomerase GyrA/ParC subunit family. As to quaternary structure, heterotetramer, composed of two GyrA and two GyrB chains. In the heterotetramer, GyrA contains the active site tyrosine that forms a transient covalent intermediate with DNA, while GyrB binds cofactors and catalyzes ATP hydrolysis.

The protein resides in the cytoplasm. The catalysed reaction is ATP-dependent breakage, passage and rejoining of double-stranded DNA.. Functionally, a type II topoisomerase that negatively supercoils closed circular double-stranded (ds) DNA in an ATP-dependent manner to modulate DNA topology and maintain chromosomes in an underwound state. Negative supercoiling favors strand separation, and DNA replication, transcription, recombination and repair, all of which involve strand separation. Also able to catalyze the interconversion of other topological isomers of dsDNA rings, including catenanes and knotted rings. Type II topoisomerases break and join 2 DNA strands simultaneously in an ATP-dependent manner. The chain is DNA gyrase subunit A from Fibrobacter succinogenes (strain ATCC 19169 / S85).